A 424-amino-acid polypeptide reads, in one-letter code: Serine--tRNA ligase (424 aa).

231–233 (TAE) is a binding site for L-serine. 262–264 (RSE) lines the ATP pocket. Glu-285 is an L-serine binding site. 349-352 (EISS) contacts ATP. Position 385 (Ser-385) interacts with L-serine.

Belongs to the class-II aminoacyl-tRNA synthetase family. Type-1 seryl-tRNA synthetase subfamily. As to quaternary structure, homodimer. The tRNA molecule binds across the dimer.

The protein resides in the cytoplasm. It catalyses the reaction tRNA(Ser) + L-serine + ATP = L-seryl-tRNA(Ser) + AMP + diphosphate + H(+). The enzyme catalyses tRNA(Sec) + L-serine + ATP = L-seryl-tRNA(Sec) + AMP + diphosphate + H(+). The protein operates within aminoacyl-tRNA biosynthesis; selenocysteinyl-tRNA(Sec) biosynthesis; L-seryl-tRNA(Sec) from L-serine and tRNA(Sec): step 1/1. Its function is as follows. Catalyzes the attachment of serine to tRNA(Ser). Is also able to aminoacylate tRNA(Sec) with serine, to form the misacylated tRNA L-seryl-tRNA(Sec), which will be further converted into selenocysteinyl-tRNA(Sec). This chain is Serine--tRNA ligase, found in Bacillus anthracis (strain A0248).